The chain runs to 105 residues: Class II hydrophobin 1 (105 aa).

The signal sequence occupies residues 1-15 (MQVLLIATLVASVLA). 4 disulfides stabilise this stretch: Cys-38/Cys-87, Cys-48/Cys-78, Cys-49/Cys-58, and Cys-88/Cys-99.

Belongs to the cerato-ulmin hydrophobin family. In terms of assembly, homotetramer. Further self-assembles to form highly ordered films at water-air interfaces through intermolecular interactions.

The protein localises to the secreted. It localises to the cell wall. In terms of biological role, aerial growth, conidiation, and dispersal of filamentous fungi in the environment rely upon a capability of their secreting small amphipathic proteins called hydrophobins (HPBs) with low sequence identity. Class I can self-assemble into an outermost layer of rodlet bundles on aerial cell surfaces, conferring cellular hydrophobicity that supports fungal growth, development and dispersal; whereas Class II form highly ordered films at water-air interfaces through intermolecular interactions but contribute nothing to the rodlet structure. HYD1 is a class II hydrophobin that plays roles in conidiation and cuticle-bypassing infection by regulating the transcripts of frequency clock protein frq, and velvet protein vosA, as well as primordium formation via the mitogen-activated protein kinase signaling pathway. Also participates in stress response, including tolerance of mycelia to osmotic and oxidative stresses, and conidia to high or low temperature. Acts as a defensive factor against Calcarisporium cordycipiticola infection, probably via the formation of a physical barrier to inhibit the pathogen infection owing to its hydrophobicity or binding to the effector of C.cordycipiticola, hindering the recognition of the pathogen. Finally, regulates the transcription of the AreA transcription factor at different developmental stages via a positive feedback loop. This chain is Class II hydrophobin 1, found in Cordyceps militaris (Caterpillar fungus).